A 565-amino-acid chain; its full sequence is Sulfite reductase [NADPH] hemoprotein beta-component (565 aa).

Positions 429, 435, 474, and 478 each coordinate [4Fe-4S] cluster. Cys-478 provides a ligand contact to siroheme.

This sequence belongs to the nitrite and sulfite reductase 4Fe-4S domain family. As to quaternary structure, alpha(8)-beta(8). The alpha component is a flavoprotein, the beta component is a hemoprotein. The cofactor is siroheme. [4Fe-4S] cluster is required as a cofactor.

It carries out the reaction hydrogen sulfide + 3 NADP(+) + 3 H2O = sulfite + 3 NADPH + 4 H(+). It functions in the pathway sulfur metabolism; hydrogen sulfide biosynthesis; hydrogen sulfide from sulfite (NADPH route): step 1/1. Functionally, component of the sulfite reductase complex that catalyzes the 6-electron reduction of sulfite to sulfide. This is one of several activities required for the biosynthesis of L-cysteine from sulfate. This chain is Sulfite reductase [NADPH] hemoprotein beta-component, found in Shewanella baltica (strain OS185).